The chain runs to 196 residues: Imidazole glycerol phosphate synthase subunit HisH (196 aa).

Residues Asn2–Met196 form the Glutamine amidotransferase type-1 domain. The active-site Nucleophile is Cys77. Catalysis depends on residues His178 and Glu180.

In terms of assembly, heterodimer of HisH and HisF.

It localises to the cytoplasm. The catalysed reaction is 5-[(5-phospho-1-deoxy-D-ribulos-1-ylimino)methylamino]-1-(5-phospho-beta-D-ribosyl)imidazole-4-carboxamide + L-glutamine = D-erythro-1-(imidazol-4-yl)glycerol 3-phosphate + 5-amino-1-(5-phospho-beta-D-ribosyl)imidazole-4-carboxamide + L-glutamate + H(+). It catalyses the reaction L-glutamine + H2O = L-glutamate + NH4(+). It functions in the pathway amino-acid biosynthesis; L-histidine biosynthesis; L-histidine from 5-phospho-alpha-D-ribose 1-diphosphate: step 5/9. In terms of biological role, IGPS catalyzes the conversion of PRFAR and glutamine to IGP, AICAR and glutamate. The HisH subunit catalyzes the hydrolysis of glutamine to glutamate and ammonia as part of the synthesis of IGP and AICAR. The resulting ammonia molecule is channeled to the active site of HisF. The polypeptide is Imidazole glycerol phosphate synthase subunit HisH (Shigella dysenteriae serotype 1 (strain Sd197)).